Here is a 404-residue protein sequence, read N- to C-terminus: MKLPIYLDYSATTPVDPRVAQKMIECLTVEGNFGNPASRSHVFGWKAEEAVENARRQVADLVSADPREIVWTSGATESNNLAIKGVAHFYASKGKHLITSKVEHKAVLDTTRQLEREGFEVTYIEPGEDGLITPSMIEAALRDDTILVSIMHVNNEIGTINDIAAIGELTRSRGVLFHVDGAQSTGKVEIDLASLKVDLMSFSAHKTYGPKGIGALYVSRKPRVRLEAAMHGGGHERGMRSGTLATHQIVGMGEAFRIAKEEMAAESVRIKALSDRFYKQVENLEELYVNGSLTARVPHNLNLSFNYVEGESLIMALKDLAVSSGSACTSASLEPSYVLRALGRNDELAHSSIRFTFGRFSTEEEIDYAAQKVCEAVTRLRALSPLWDMFKDGVDISKIEWAAH.

Pyridoxal 5'-phosphate-binding positions include 75 to 76, Asn-155, Gln-183, and 203 to 205; these read AT and SAH. Residue Lys-206 is modified to N6-(pyridoxal phosphate)lysine. Residue Thr-243 participates in pyridoxal 5'-phosphate binding. Catalysis depends on Cys-328, which acts as the Cysteine persulfide intermediate. Cys-328 serves as a coordination point for [2Fe-2S] cluster.

This sequence belongs to the class-V pyridoxal-phosphate-dependent aminotransferase family. NifS/IscS subfamily. In terms of assembly, homodimer. Forms a heterotetramer with IscU, interacts with other sulfur acceptors. It depends on pyridoxal 5'-phosphate as a cofactor.

The protein resides in the cytoplasm. It catalyses the reaction (sulfur carrier)-H + L-cysteine = (sulfur carrier)-SH + L-alanine. The protein operates within cofactor biosynthesis; iron-sulfur cluster biosynthesis. Its function is as follows. Master enzyme that delivers sulfur to a number of partners involved in Fe-S cluster assembly, tRNA modification or cofactor biosynthesis. Catalyzes the removal of elemental sulfur atoms from cysteine to produce alanine. Functions as a sulfur delivery protein for Fe-S cluster synthesis onto IscU, an Fe-S scaffold assembly protein, as well as other S acceptor proteins. The sequence is that of Cysteine desulfurase IscS from Pseudomonas syringae pv. tomato (strain ATCC BAA-871 / DC3000).